A 160-amino-acid polypeptide reads, in one-letter code: Putative 4-hydroxy-4-methyl-2-oxoglutarate aldolase (160 aa).

Substrate-binding positions include 76-79 (GGNL) and arginine 98. An a divalent metal cation-binding site is contributed by aspartate 99.

Belongs to the class II aldolase/RraA-like family. As to quaternary structure, homotrimer. Requires a divalent metal cation as cofactor.

The catalysed reaction is 4-hydroxy-4-methyl-2-oxoglutarate = 2 pyruvate. It catalyses the reaction oxaloacetate + H(+) = pyruvate + CO2. Catalyzes the aldol cleavage of 4-hydroxy-4-methyl-2-oxoglutarate (HMG) into 2 molecules of pyruvate. Also contains a secondary oxaloacetate (OAA) decarboxylase activity due to the common pyruvate enolate transition state formed following C-C bond cleavage in the retro-aldol and decarboxylation reactions. This chain is Putative 4-hydroxy-4-methyl-2-oxoglutarate aldolase, found in Deinococcus radiodurans (strain ATCC 13939 / DSM 20539 / JCM 16871 / CCUG 27074 / LMG 4051 / NBRC 15346 / NCIMB 9279 / VKM B-1422 / R1).